A 173-amino-acid polypeptide reads, in one-letter code: Shikimate kinase 1 (173 aa).

14–19 lines the ATP pocket; it reads GAGKST. Mg(2+) is bound at residue serine 18. Positions 36, 60, and 82 each coordinate substrate. Arginine 120 serves as a coordination point for ATP. Arginine 140 is a binding site for substrate. Glutamine 157 serves as a coordination point for ATP.

It belongs to the shikimate kinase family. In terms of assembly, monomer. Mg(2+) is required as a cofactor.

It localises to the cytoplasm. The catalysed reaction is shikimate + ATP = 3-phosphoshikimate + ADP + H(+). It participates in metabolic intermediate biosynthesis; chorismate biosynthesis; chorismate from D-erythrose 4-phosphate and phosphoenolpyruvate: step 5/7. Functionally, catalyzes the specific phosphorylation of the 3-hydroxyl group of shikimic acid using ATP as a cosubstrate. The chain is Shikimate kinase 1 from Escherichia fergusonii (strain ATCC 35469 / DSM 13698 / CCUG 18766 / IAM 14443 / JCM 21226 / LMG 7866 / NBRC 102419 / NCTC 12128 / CDC 0568-73).